We begin with the raw amino-acid sequence, 66 residues long: Beta-mammal toxin Css2 (66 aa).

The 66-residue stretch at 1–66 (KEGYLVSKST…VWPLPNKTCN (66 aa)) folds into the LCN-type CS-alpha/beta domain. Disulfide bonds link Cys-12-Cys-65, Cys-16-Cys-41, Cys-25-Cys-46, and Cys-29-Cys-48. Asn-66 carries the asparagine amide modification.

Belongs to the long (4 C-C) scorpion toxin superfamily. Sodium channel inhibitor family. Beta subfamily. C-terminal amidation increases its affinity for sodium channels. As to expression, expressed by the venom gland.

The protein resides in the secreted. Its function is as follows. Beta toxin that binds site-4 of sodium channels (Nav) and reduces peak current (observed on Nav1.6/SCN8A (IC(50)=307 nM)), shifts the voltage of activation toward more negative potentials (observed on Nav1.6, Nav1.1 (weak), Nav1.2 (weak), and Nav1.7 (weak)), and induces resurgent currents at negative voltages following brief and strong depolarizations (observed on Nav1.6, Nav1.1 (weak), and Nav1.7 (weak)). A reduction of peak current of Nav1.5/SCN7A has been observed in another study (IC(50)=35-40 nM). This toxin is only active on mammals. It has been shown to bind phospholipids. The protein is Beta-mammal toxin Css2 of Centruroides suffusus (Durango bark scorpion).